The following is a 506-amino-acid chain: Gallate 1-beta-glucosyltransferase 84A23 (506 aa).

Catalysis depends on His-20, which acts as the Proton acceptor. Residue His-20 participates in an anthocyanidin binding. UDP-alpha-D-glucose-binding residues include Gln-345, His-360, Trp-363, Asn-364, Ser-365, and Glu-368. Gly-383 serves as a coordination point for an anthocyanidin. Residues Asp-384 and Gln-385 each coordinate UDP-alpha-D-glucose.

This sequence belongs to the UDP-glycosyltransferase family. In terms of tissue distribution, expressed in roots of the seedlings.

The protein resides in the cytoplasm. It catalyses the reaction 3,4,5-trihydroxybenzoate + UDP-alpha-D-glucose = 1-O-galloyl-beta-D-glucose + UDP. The catalysed reaction is 3,4-dihydroxybenzoate + UDP-alpha-D-glucose = 1-O-(3,4-dihydroxy-benzoyl)-beta-D-glucose + UDP. The enzyme catalyses 4-hydroxybenzoate + UDP-alpha-D-glucose = 4-(beta-D-glucosyloxy)benzoate + UDP + H(+). It carries out the reaction (E)-cinnamate + UDP-alpha-D-glucose = 1-O-(trans-cinnamoyl)-beta-D-glucose + UDP. It catalyses the reaction (E)-sinapate + UDP-alpha-D-glucose = 1-O-(trans-sinapoyl)-beta-D-glucose + UDP. The catalysed reaction is (E)-4-coumarate + UDP-alpha-D-glucose = 1-O-(trans-4-coumaroyl)-beta-D-glucose + UDP. The enzyme catalyses (E)-caffeate + UDP-alpha-D-glucose = 1-O-[(E)-caffeoyl]-beta-D-glucose + UDP. It carries out the reaction (E)-ferulate + UDP-alpha-D-glucose = 1-O-[(E)-feruloyl]-beta-D-glucose + UDP. It catalyses the reaction genistein + UDP-alpha-D-glucose = genistein 7-O-beta-D-glucoside + UDP + H(+). The catalysed reaction is apigenin + UDP-alpha-D-glucose = apigenin 7-O-beta-D-glucoside + UDP + H(+). The enzyme catalyses luteolin + UDP-alpha-D-glucose = luteolin 7-O-beta-D-glucoside + UDP + H(+). Functionally, glucosyltransferase that catalyzes the formation of 1-O-beta-D-glucose esters with hydroxybenzoic acids and cinnamic acid including its derivatives as preferred glucosyl acceptors. Has significant activity with gallic acid (3,4,5-trihydroxybenzoic acid), 3,4-dihydroxybenzoic acid, 4-hydroxybenzoic acid, cinnamic acid, sinapic acid, coumaric acid, caffeic acid and ferulic acid in vitro. Gallic acid is the predicted native substrate of the enzyme, which thus catalyzes the formation of 1-O-galloyl-beta-D-glucose, the first committed step of hydrolyzable tannins (HTs) biosynthesis, with punicalagin isomers being the major HTs of pomegranate. Catalyzes the formation of flavonoid glucosides with genistein, apigenin and luteolin in vitro. Has low activity with benzoic acid, 2-hydroxybenzoic acid, 3-hydroxybenzoic acid, 2,4-dihydroxybenzoic acid, naringenin and quercetin. No activity with catechol, resveratrol, chlorogenic acid, catechin and epicatechin (building blocks of proanthocyanidins) or cyanidin, delphinidin and pelargonidin (the three anthocyanidins). The protein is Gallate 1-beta-glucosyltransferase 84A23 of Punica granatum (Pomegranate).